The sequence spans 146 residues: Large ribosomal subunit protein uL15 (146 aa).

A disordered region spans residues 1–51 (MQLNTIKPAEGSKKNRRHVGRGIGSGLGKTAGRGHKGQKSRSGGFHKVGFE). Residues 21–31 (RGIGSGLGKTA) are compositionally biased toward gly residues.

Belongs to the universal ribosomal protein uL15 family. Part of the 50S ribosomal subunit.

In terms of biological role, binds to the 23S rRNA. The chain is Large ribosomal subunit protein uL15 from Polynucleobacter necessarius subsp. necessarius (strain STIR1).